Reading from the N-terminus, the 187-residue chain is Ethylene-responsive transcription factor ERF015 (187 aa).

Residues 26 to 83 (CYRGVRKRSWGKWVSEIRVPKTGRRIWLGSYDAPEKAARAYDAALFCIRGEKGVYNFP) constitute a DNA-binding region (AP2/ERF).

The protein belongs to the AP2/ERF transcription factor family. ERF subfamily.

It is found in the nucleus. Its function is as follows. Probably acts as a transcriptional activator. Binds to the GCC-box pathogenesis-related promoter element. May be involved in the regulation of gene expression by stress factors and by components of stress signal transduction pathways. The polypeptide is Ethylene-responsive transcription factor ERF015 (ERF015) (Arabidopsis thaliana (Mouse-ear cress)).